Here is a 196-residue protein sequence, read N- to C-terminus: Holliday junction branch migration complex subunit RuvA (196 aa).

The segment at 1–65 is domain I; sequence MIGYLRGKII…EDALQLFGFH (65 aa). Residues 66–140 form a domain II region; the sequence is DKEEKNLFLS…GKLVSIEEGG (75 aa). Residues 140 to 144 are flexible linker; the sequence is GVVAK. The domain III stretch occupies residues 145–196; it reads AKSVAHTQITSALLNLGYKSQLVDQFVSSLPADIAVEDGIRKGFQTLSGGLS.

It belongs to the RuvA family. Homotetramer. Forms an RuvA(8)-RuvB(12)-Holliday junction (HJ) complex. HJ DNA is sandwiched between 2 RuvA tetramers; dsDNA enters through RuvA and exits via RuvB. An RuvB hexamer assembles on each DNA strand where it exits the tetramer. Each RuvB hexamer is contacted by two RuvA subunits (via domain III) on 2 adjacent RuvB subunits; this complex drives branch migration. In the full resolvosome a probable DNA-RuvA(4)-RuvB(12)-RuvC(2) complex forms which resolves the HJ.

The protein localises to the cytoplasm. In terms of biological role, the RuvA-RuvB-RuvC complex processes Holliday junction (HJ) DNA during genetic recombination and DNA repair, while the RuvA-RuvB complex plays an important role in the rescue of blocked DNA replication forks via replication fork reversal (RFR). RuvA specifically binds to HJ cruciform DNA, conferring on it an open structure. The RuvB hexamer acts as an ATP-dependent pump, pulling dsDNA into and through the RuvAB complex. HJ branch migration allows RuvC to scan DNA until it finds its consensus sequence, where it cleaves and resolves the cruciform DNA. This chain is Holliday junction branch migration complex subunit RuvA, found in Bdellovibrio bacteriovorus (strain ATCC 15356 / DSM 50701 / NCIMB 9529 / HD100).